Here is a 753-residue protein sequence, read N- to C-terminus: MGEHSPDNNIIYFEAEEDELTPDDKMLRFVDKNGLVPSSSGTVYDRTTVLIEQDPGTLEDEDDDGQCGEHLPFLVGGEEGFHLIDHEAMSQGYVQHIISPDQIHLTINPGSTPMPRNIEGATLTLQSECPETKRKEVKRYQCTFEGCPRTYSTAGNLRTHQKTHRGEYTFVCNQEGCGKAFLTSYSLRIHVRVHTKEKPFECDVQGCEKAFNTLYRLKAHQRLHTGKTFNCESEGCSKYFTTLSDLRKHIRTHTGEKPFRCDHDGCGKAFAASHHLKTHVRTHTGERPFFCPSNGCEKTFSTQYSLKSHMKGHDNKGHSYNALPQHNGSEDTNHSLCLSDLSLLSTDSELRENSSTTQGQDLSTISPAIIFESMFQNSDDTAIQEDPQQTASLTESFNGDAESVSDVPPSTGNSASLSLPLVLQPGLSEPPQPLLPASAPSAPPPAPSLGPGSQQAAFGNPPALLQPPEVPVPHSTQFAANHQEFLPHPQAPQPIVPGLSVVAGASASAAAVASAVAAPAPPQSTTEPLPAMVQTLPLGANSVLTNNPTITITPTPNTAILQSSLVMGEQNLQWILNGATSSPQNQEQIQQASKVEKVFFTTAVPVASSPGSSVQQIGLSVPVIIIKQEEACQCQCACRDSAKERASSRRKGCSSPPPPEPSPQAPDGPSLQLPAQTFSSAPVPGSSSSTLPSSCEQSRQAETPSDPQTETLSAMDVSEFLSLQSLDTPSNLIPIEALLQGEEEMGLTSSFSK.

Gly2 carries the N-acetylglycine modification. Position 5 is a phosphoserine (Ser5). The short motif at 133 to 138 (KRKEVK) is the Nuclear localization signal element. 6 C2H2-type zinc fingers span residues 140-164 (YQCT…QKTH), 170-194 (FVCN…VRVH), 200-224 (FECD…QRLH), 229-253 (FNCE…IRTH), 259-283 (FRCD…VRTH), and 289-313 (FFCP…MKGH). Position 305 is a phosphoserine (Ser305). Disordered stretches follow at residues 308-328 (SHMK…QHNG), 395-466 (ESFN…ALLQ), and 648-715 (SRRK…LSAM). Positions 408–417 (PPSTGNSASL) are enriched in polar residues. Positions 655-666 (SPPPPEPSPQAP) are enriched in pro residues. Positions 679–698 (SSAPVPGSSSSTLPSSCEQS) are enriched in low complexity. The segment covering 700-712 (QAETPSDPQTETL) has biased composition (polar residues).

Its subcellular location is the nucleus. It is found in the cytoplasm. In terms of biological role, zinc-dependent transcriptional regulator of cellular adaption to conditions of exposure to heavy metals. Binds to metal responsive elements (MRE) in promoters and activates the transcription of metallothionein genes like metallothionein-2/MT2A. Also regulates the expression of metalloproteases in response to intracellular zinc and functions as a catabolic regulator of cartilages. The sequence is that of Metal regulatory transcription factor 1 (MTF1) from Homo sapiens (Human).